Here is a 369-residue protein sequence, read N- to C-terminus: Actin-related protein T3 (369 aa).

It belongs to the actin family. As to quaternary structure, interacts with PFN3. As to expression, testis specific (at protein level). Expressed specifically in haploid germ cells.

Its subcellular location is the cytoplasm. The protein localises to the cytoskeleton. It is found in the nucleus. This chain is Actin-related protein T3 (Actrt3), found in Mus musculus (Mouse).